A 512-amino-acid polypeptide reads, in one-letter code: MAKIVDCFADRPIIVGSGLAGLIAALTISPEPSVLVTRSALGAETSSAWAQGGMSVSLSPDDNPSLHLADTLAAGDGLCDAVAAESIILEALDAFHVLQHFGIHFDQDSNGHLALGLEAAHSRRRIVHVGGDRSGTAIVQALTACVLNDPSITVLEGLEARHILMADNVVCGLLLANPTSEIVLPSSRILLATGGIGGLYDATTNPVNNFGQGIAMAARAGAVLADMEFVQFHPTALHCHNRPLALVSEAVRGEGAVLINERGERFMADIPGAELAARNIVAQAISAEITRGGQVFLDARQALGARFSTRFPTITALCHKVGIDPVHMPIPVCPAAHYHMGGIATDRQGRSSIPGLWVAGEAASTGLHGANRLASNSLLEAVVMGTRAARDITSHNTPHPLGTIPITPKKPDTTLIRPIVSQCLGVLRHAADMHRAIAALLPFVEGEEESSDPAIVALLIAIFAHLRTESRGAHARTDFPLKHDTTQRRNMTLEDVLEIAHSRIAQRKEKIS.

Residues S17–A20 and S46–G53 each bind FAD. R278 acts as the Proton donor/acceptor in catalysis. Residues E361 and S377 to L378 each bind FAD.

Belongs to the FAD-dependent oxidoreductase 2 family. NadB subfamily. FAD serves as cofactor.

It localises to the cytoplasm. It catalyses the reaction L-aspartate + O2 = iminosuccinate + H2O2. It functions in the pathway cofactor biosynthesis; NAD(+) biosynthesis; iminoaspartate from L-aspartate (oxidase route): step 1/1. In terms of biological role, catalyzes the oxidation of L-aspartate to iminoaspartate, the first step in the de novo biosynthesis of NAD(+). This is L-aspartate oxidase (nadB) from Xylella fastidiosa (strain Temecula1 / ATCC 700964).